A 407-amino-acid polypeptide reads, in one-letter code: uncharacterized protein (407 aa).

12 consecutive transmembrane segments (helical) span residues 22-42 (IVSV…PLAV), 51-71 (LGFS…ATLA), 101-121 (ALLL…GLLV), 126-146 (VLGI…IGRV), 154-174 (VISW…PVGV), 179-199 (ALIP…GYYL), 227-247 (GLGL…ITLY), 258-278 (LSLT…ANTI), 286-306 (VAIV…LAPV), 309-329 (VALV…PALG), 347-367 (AYSV…GYVA), and 369-389 (AFGY…GVAL).

It belongs to the major facilitator superfamily. YhhS family.

The protein localises to the cell inner membrane. This is an uncharacterized protein from Burkholderia mallei (strain NCTC 10229).